The chain runs to 127 residues: Major sperm protein 2 (127 aa).

A2 carries the post-translational modification N-acetylalanine. One can recognise an MSP domain in the interval 9–126 (DIHTQPGSKI…RRKNLPIEYN (118 aa)).

Sperm.

It localises to the cell projection. The protein resides in the pseudopodium. The protein localises to the cytoplasm. It is found in the cytoskeleton. Functionally, central component in molecular interactions underlying sperm crawling. Forms an extensive filament system that extends from sperm villipoda, along the leading edge of the pseudopod. In Onchocerca volvulus, this protein is Major sperm protein 2.